A 460-amino-acid chain; its full sequence is Acetyl-coenzyme A carboxylase carboxyl transferase subunit beta, chloroplastic (460 aa).

One can recognise a CoA carboxyltransferase N-terminal domain in the interval 179–460 (LWVQCESCYG…GFFPLTQNGN (282 aa)). Zn(2+)-binding residues include C183, C186, C202, and C205. The segment at 183–205 (CESCYGLNYKKFFKSKMNICEHC) adopts a C4-type zinc-finger fold.

It belongs to the AccD/PCCB family. Acetyl-CoA carboxylase is a heterohexamer composed of biotin carboxyl carrier protein, biotin carboxylase and 2 subunits each of ACCase subunit alpha and ACCase plastid-coded subunit beta (accD). Requires Zn(2+) as cofactor.

The protein localises to the plastid. The protein resides in the chloroplast stroma. It carries out the reaction N(6)-carboxybiotinyl-L-lysyl-[protein] + acetyl-CoA = N(6)-biotinyl-L-lysyl-[protein] + malonyl-CoA. It participates in lipid metabolism; malonyl-CoA biosynthesis; malonyl-CoA from acetyl-CoA: step 1/1. In terms of biological role, component of the acetyl coenzyme A carboxylase (ACC) complex. Biotin carboxylase (BC) catalyzes the carboxylation of biotin on its carrier protein (BCCP) and then the CO(2) group is transferred by the transcarboxylase to acetyl-CoA to form malonyl-CoA. This is Acetyl-coenzyme A carboxylase carboxyl transferase subunit beta, chloroplastic from Cicer arietinum (Chickpea).